The following is a 107-amino-acid chain: Nitrogenase-stabilizing/protective protein NifW (107 aa).

The protein belongs to the NifW family. As to quaternary structure, homotrimer; associates with NifD.

In terms of biological role, may protect the nitrogenase Fe-Mo protein from oxidative damage. In Gloeothece citriformis (strain PCC 7424) (Cyanothece sp. (strain PCC 7424)), this protein is Nitrogenase-stabilizing/protective protein NifW.